A 426-amino-acid chain; its full sequence is Tol-Pal system protein TolB (426 aa).

The N-terminal stretch at 1–25 (MNAMSRISRRIFLALALSLAGLAQA) is a signal peptide.

Belongs to the TolB family. In terms of assembly, the Tol-Pal system is composed of five core proteins: the inner membrane proteins TolA, TolQ and TolR, the periplasmic protein TolB and the outer membrane protein Pal. They form a network linking the inner and outer membranes and the peptidoglycan layer.

It is found in the periplasm. In terms of biological role, part of the Tol-Pal system, which plays a role in outer membrane invagination during cell division and is important for maintaining outer membrane integrity. This chain is Tol-Pal system protein TolB, found in Dechloromonas aromatica (strain RCB).